The chain runs to 277 residues: MHLLETRDLTHIYRGDVHALEGVNFTAERKSRIAVIGPNGAGKSTLFKHFNGILKPTSGEVLVRGEPITKENVREVRKFVGIVFQNPDDQIFSPTVEQDIAFGPINLGLDEATVAHRVEEALHLLGIEELRERVPHHLSGGEKKRVAIAGILAMEPQVLVLDEPTAGLDPQGVADLVAFVNRLPEEYGMTVVFSTHHLDLVAEMADYIYVMDKGRVVGSGTVEEVFTRPELLTQTRLDVPPIPKLIRSLRENGVAIDMAYTYEDAKKSFLDAYARRA.

In terms of domain architecture, ABC transporter spans 4–238 (LETRDLTHIY…PELLTQTRLD (235 aa)). Residue 37–44 (GPNGAGKS) participates in ATP binding.

The protein belongs to the ABC transporter superfamily. Energy-coupling factor EcfA family. Forms a stable energy-coupling factor (ECF) transporter complex composed of 2 membrane-embedded substrate-binding proteins (S component), 2 ATP-binding proteins (A component) and 2 transmembrane proteins (T component).

Its subcellular location is the cell membrane. ATP-binding (A) component of a common energy-coupling factor (ECF) ABC-transporter complex. Unlike classic ABC transporters this ECF transporter provides the energy necessary to transport a number of different substrates. This is Energy-coupling factor transporter ATP-binding protein EcfA from Methanoculleus marisnigri (strain ATCC 35101 / DSM 1498 / JR1).